Reading from the N-terminus, the 325-residue chain is Transaldolase (325 aa).

K125 serves as the catalytic Schiff-base intermediate with substrate.

This sequence belongs to the transaldolase family. Type 2 subfamily.

It is found in the cytoplasm. The catalysed reaction is D-sedoheptulose 7-phosphate + D-glyceraldehyde 3-phosphate = D-erythrose 4-phosphate + beta-D-fructose 6-phosphate. It functions in the pathway carbohydrate degradation; pentose phosphate pathway; D-glyceraldehyde 3-phosphate and beta-D-fructose 6-phosphate from D-ribose 5-phosphate and D-xylulose 5-phosphate (non-oxidative stage): step 2/3. In terms of biological role, transaldolase is important for the balance of metabolites in the pentose-phosphate pathway. This chain is Transaldolase, found in Campylobacter jejuni subsp. jejuni serotype O:6 (strain 81116 / NCTC 11828).